The primary structure comprises 278 residues: Putative pyruvate, phosphate dikinase regulatory protein (278 aa).

149 to 156 (GVSRSSKT) contributes to the ADP binding site.

This sequence belongs to the pyruvate, phosphate/water dikinase regulatory protein family. PDRP subfamily.

The enzyme catalyses N(tele)-phospho-L-histidyl/L-threonyl-[pyruvate, phosphate dikinase] + ADP = N(tele)-phospho-L-histidyl/O-phospho-L-threonyl-[pyruvate, phosphate dikinase] + AMP + H(+). The catalysed reaction is N(tele)-phospho-L-histidyl/O-phospho-L-threonyl-[pyruvate, phosphate dikinase] + phosphate + H(+) = N(tele)-phospho-L-histidyl/L-threonyl-[pyruvate, phosphate dikinase] + diphosphate. Its function is as follows. Bifunctional serine/threonine kinase and phosphorylase involved in the regulation of the pyruvate, phosphate dikinase (PPDK) by catalyzing its phosphorylation/dephosphorylation. In Erythrobacter litoralis (strain HTCC2594), this protein is Putative pyruvate, phosphate dikinase regulatory protein.